We begin with the raw amino-acid sequence, 118 residues long: Small ribosomal subunit protein uS13 (118 aa).

Positions Gly-94–Lys-118 are disordered.

The protein belongs to the universal ribosomal protein uS13 family. Part of the 30S ribosomal subunit. Forms a loose heterodimer with protein S19. Forms two bridges to the 50S subunit in the 70S ribosome.

In terms of biological role, located at the top of the head of the 30S subunit, it contacts several helices of the 16S rRNA. In the 70S ribosome it contacts the 23S rRNA (bridge B1a) and protein L5 of the 50S subunit (bridge B1b), connecting the 2 subunits; these bridges are implicated in subunit movement. Contacts the tRNAs in the A and P-sites. This is Small ribosomal subunit protein uS13 from Tolumonas auensis (strain DSM 9187 / NBRC 110442 / TA 4).